The primary structure comprises 72 residues: SPbeta prophage-derived uncharacterized protein YoqN (72 aa).

The chain is SPbeta prophage-derived uncharacterized protein YoqN (yoqN) from Bacillus subtilis (strain 168).